Reading from the N-terminus, the 595-residue chain is UvrABC system protein C (595 aa).

A GIY-YIG domain is found at 14–91; sequence NNPGCYLHKD…IQENMPKFNI (78 aa). Positions 196 to 231 constitute a UVR domain; the sequence is DKIVNQLKAKMKDMSDQMEFERAAEYRDLIEAVSTL.

It belongs to the UvrC family. In terms of assembly, interacts with UvrB in an incision complex.

Its subcellular location is the cytoplasm. The UvrABC repair system catalyzes the recognition and processing of DNA lesions. UvrC both incises the 5' and 3' sides of the lesion. The N-terminal half is responsible for the 3' incision and the C-terminal half is responsible for the 5' incision. The chain is UvrABC system protein C from Streptococcus thermophilus (strain ATCC BAA-250 / LMG 18311).